Here is an 805-residue protein sequence, read N- to C-terminus: DNA gyrase subunit B (805 aa).

A Toprim domain is found at 431–546 (CEMYIVEGDS…NECVYIAQPP (116 aa)). Mg(2+) contacts are provided by Glu437, Asp511, and Asp513.

Belongs to the type II topoisomerase GyrB family. In terms of assembly, heterotetramer, composed of two GyrA and two GyrB chains. In the heterotetramer, GyrA contains the active site tyrosine that forms a transient covalent intermediate with DNA, while GyrB binds cofactors and catalyzes ATP hydrolysis. Requires Mg(2+) as cofactor. Mn(2+) serves as cofactor. The cofactor is Ca(2+).

The protein resides in the cytoplasm. It catalyses the reaction ATP-dependent breakage, passage and rejoining of double-stranded DNA.. Functionally, a type II topoisomerase that negatively supercoils closed circular double-stranded (ds) DNA in an ATP-dependent manner to modulate DNA topology and maintain chromosomes in an underwound state. Negative supercoiling favors strand separation, and DNA replication, transcription, recombination and repair, all of which involve strand separation. Also able to catalyze the interconversion of other topological isomers of dsDNA rings, including catenanes and knotted rings. Type II topoisomerases break and join 2 DNA strands simultaneously in an ATP-dependent manner. In Chlamydia pneumoniae (Chlamydophila pneumoniae), this protein is DNA gyrase subunit B.